Reading from the N-terminus, the 256-residue chain is Cell division protein DivIB (256 aa).

The Cytoplasmic portion of the chain corresponds to 1 to 30; that stretch reads MNNSKVIKLQDRVPKLKNQKKKNKKNVNHR. Residues 31–51 traverse the membrane as a helical segment; it reads LILYISILFLLVLFLIYFRSP. Topologically, residues 52 to 256 are extracellular; that stretch reads LSNIKKISVF…KELGAEEKKE (205 aa). The POTRA domain occupies 53-121; the sequence is SNIKKISVFG…NNIDIHIEEY (69 aa).

Belongs to the FtsQ/DivIB family. DivIB subfamily.

The protein localises to the cell membrane. Its function is as follows. Cell division protein that may be involved in stabilizing or promoting the assembly of the division complex. In Bacillus cereus (strain ATCC 14579 / DSM 31 / CCUG 7414 / JCM 2152 / NBRC 15305 / NCIMB 9373 / NCTC 2599 / NRRL B-3711), this protein is Cell division protein DivIB.